The primary structure comprises 266 residues: Hydroxyethylthiazole kinase (266 aa).

M43 serves as a coordination point for substrate. ATP-binding residues include R119 and T166. G193 serves as a coordination point for substrate.

The protein belongs to the Thz kinase family. Requires Mg(2+) as cofactor.

The catalysed reaction is 5-(2-hydroxyethyl)-4-methylthiazole + ATP = 4-methyl-5-(2-phosphooxyethyl)-thiazole + ADP + H(+). The protein operates within cofactor biosynthesis; thiamine diphosphate biosynthesis; 4-methyl-5-(2-phosphoethyl)-thiazole from 5-(2-hydroxyethyl)-4-methylthiazole: step 1/1. In terms of biological role, catalyzes the phosphorylation of the hydroxyl group of 4-methyl-5-beta-hydroxyethylthiazole (THZ). This Methanococcus maripaludis (strain C7 / ATCC BAA-1331) protein is Hydroxyethylthiazole kinase.